The primary structure comprises 463 residues: Chromosomal replication initiator protein DnaA (463 aa).

Positions 1-83 (MSTNQIILTD…LQLFQHYNNT (83 aa)) are domain I, interacts with DnaA modulators. Positions 83-124 (TIKSIEIITKELPGTTQTVTELPTKTFADIGSSELNSENIFS) are domain II. Residues 125–343 (TLDARFTFDN…GALNKVIAHS (219 aa)) form a domain III, AAA+ region region. The ATP site is built by G171, G173, K174, and T175. Positions 344–463 (NFTLKEITLE…INLLMKILQN (120 aa)) are domain IV, binds dsDNA.

This sequence belongs to the DnaA family. As to quaternary structure, oligomerizes as a right-handed, spiral filament on DNA at oriC.

It localises to the cytoplasm. Functionally, plays an essential role in the initiation and regulation of chromosomal replication. ATP-DnaA binds to the origin of replication (oriC) to initiate formation of the DNA replication initiation complex once per cell cycle. Binds the DnaA box (a 9 base pair repeat at the origin) and separates the double-stranded (ds)DNA. Forms a right-handed helical filament on oriC DNA; dsDNA binds to the exterior of the filament while single-stranded (ss)DNA is stabiized in the filament's interior. The ATP-DnaA-oriC complex binds and stabilizes one strand of the AT-rich DNA unwinding element (DUE), permitting loading of DNA polymerase. After initiation quickly degrades to an ADP-DnaA complex that is not apt for DNA replication. Binds acidic phospholipids. The chain is Chromosomal replication initiator protein DnaA from Rickettsia peacockii (strain Rustic).